A 669-amino-acid chain; its full sequence is Probable ferric reductase transmembrane component (669 aa).

The interval 17–86 (FKTNGTEYAK…SGKGNSGTST (70 aa)) is disordered. Asn-20, Asn-52, Asn-64, and Asn-116 each carry an N-linked (GlcNAc...) asparagine glycan. A compositionally biased stretch (low complexity) spans 28 to 86 (TTKSSSGSKTSTSASKSSKSTGSSNASKSSTNAHGSNSSTSSTSSSSSKSGKGNSGTST). The chain crosses the membrane as a helical span at residues 122 to 142 (GSGLLGYWAGILAIAIFANMI). A glycan (N-linked (GlcNAc...) asparagine) is linked at Asn-152. The next 5 helical transmembrane spans lie at 198–218 (IIVVIFVVLTGLFSALHIHHV), 234–254 (LIADRTGILGTFLIPLLILFG), 281–301 (VDVLLIIVHAITFSVSDKATG), 313–333 (IWGTVSTICGGFILFQAMLFF), and 340–360 (VFFLIHIVLVVFFVVGGYYHL). Residues 239–373 (TGILGTFLIP…GYGDFMWAAI (135 aa)) enclose the Ferric oxidoreductase domain. Residues 374 to 492 (AVWAFDRVVR…EGPYGEPSSA (119 aa)) enclose the FAD-binding FR-type domain. Residue 437-442 (HPFTFT) coordinates FAD. A helical membrane pass occupies residues 499-519 (VVFVAGGNGIPGIYSECVDLA). N-linked (GlcNAc...) asparagine glycosylation is found at Asn-524 and Asn-653.

Belongs to the ferric reductase (FRE) family. FAD is required as a cofactor.

It localises to the membrane. It catalyses the reaction 2 a Fe(II)-siderophore + NAD(+) + H(+) = 2 a Fe(III)-siderophore + NADH. The polypeptide is Probable ferric reductase transmembrane component (CFL1) (Candida albicans (Yeast)).